A 295-amino-acid chain; its full sequence is Phosphatidylserine decarboxylase proenzyme (295 aa).

Residues aspartate 101, histidine 158, and serine 262 each act as charge relay system; for autoendoproteolytic cleavage activity in the active site. Serine 262 (schiff-base intermediate with substrate; via pyruvic acid; for decarboxylase activity) is an active-site residue. Serine 262 bears the Pyruvic acid (Ser); by autocatalysis mark.

It belongs to the phosphatidylserine decarboxylase family. PSD-B subfamily. Prokaryotic type I sub-subfamily. As to quaternary structure, heterodimer of a large membrane-associated beta subunit and a small pyruvoyl-containing alpha subunit. The cofactor is pyruvate. Is synthesized initially as an inactive proenzyme. Formation of the active enzyme involves a self-maturation process in which the active site pyruvoyl group is generated from an internal serine residue via an autocatalytic post-translational modification. Two non-identical subunits are generated from the proenzyme in this reaction, and the pyruvate is formed at the N-terminus of the alpha chain, which is derived from the carboxyl end of the proenzyme. The autoendoproteolytic cleavage occurs by a canonical serine protease mechanism, in which the side chain hydroxyl group of the serine supplies its oxygen atom to form the C-terminus of the beta chain, while the remainder of the serine residue undergoes an oxidative deamination to produce ammonia and the pyruvoyl prosthetic group on the alpha chain. During this reaction, the Ser that is part of the protease active site of the proenzyme becomes the pyruvoyl prosthetic group, which constitutes an essential element of the active site of the mature decarboxylase.

It is found in the cell membrane. It catalyses the reaction a 1,2-diacyl-sn-glycero-3-phospho-L-serine + H(+) = a 1,2-diacyl-sn-glycero-3-phosphoethanolamine + CO2. The protein operates within phospholipid metabolism; phosphatidylethanolamine biosynthesis; phosphatidylethanolamine from CDP-diacylglycerol: step 2/2. Functionally, catalyzes the formation of phosphatidylethanolamine (PtdEtn) from phosphatidylserine (PtdSer). The polypeptide is Phosphatidylserine decarboxylase proenzyme (Pasteurella multocida (strain Pm70)).